Here is a 444-residue protein sequence, read N- to C-terminus: Ribulose bisphosphate carboxylase large chain (444 aa).

Residue lysine 5 is modified to N6,N6,N6-trimethyllysine. Positions 114 and 164 each coordinate substrate. Lysine 166 serves as the catalytic Proton acceptor. Lysine 168 is a binding site for substrate. Mg(2+) is bound by residues lysine 192, aspartate 194, and glutamate 195. Lysine 192 carries the N6-carboxylysine modification. Histidine 285 serves as the catalytic Proton acceptor. Substrate is bound by residues arginine 286, histidine 318, and serine 370.

Belongs to the RuBisCO large chain family. Type I subfamily. As to quaternary structure, heterohexadecamer of 8 large chains and 8 small chains; disulfide-linked. The disulfide link is formed within the large subunit homodimers. Mg(2+) is required as a cofactor. In terms of processing, the disulfide bond which can form in the large chain dimeric partners within the hexadecamer appears to be associated with oxidative stress and protein turnover.

Its subcellular location is the plastid. It localises to the chloroplast. It carries out the reaction 2 (2R)-3-phosphoglycerate + 2 H(+) = D-ribulose 1,5-bisphosphate + CO2 + H2O. It catalyses the reaction D-ribulose 1,5-bisphosphate + O2 = 2-phosphoglycolate + (2R)-3-phosphoglycerate + 2 H(+). In terms of biological role, ruBisCO catalyzes two reactions: the carboxylation of D-ribulose 1,5-bisphosphate, the primary event in carbon dioxide fixation, as well as the oxidative fragmentation of the pentose substrate in the photorespiration process. Both reactions occur simultaneously and in competition at the same active site. The chain is Ribulose bisphosphate carboxylase large chain from Ginkgo biloba (Ginkgo).